A 433-amino-acid chain; its full sequence is 26S proteasome regulatory subunit 7 (433 aa).

The interval 1 to 22 (MPDYLGADQRKTKEDEKDDKPI) is disordered. Residues 8–22 (DQRKTKEDEKDDKPI) show a composition bias toward basic and acidic residues. Residue Lys116 is modified to N6-acetyllysine. 216-223 (GPPGTGKT) provides a ligand contact to ATP. N6-acetyllysine is present on Lys422.

It belongs to the AAA ATPase family. In terms of assembly, component of the 19S proteasome regulatory particle complex. The 26S proteasome consists of a 20S core particle (CP) and two 19S regulatory subunits (RP). The regulatory particle is made of a lid composed of 9 subunits, a base containing 6 ATPases including PSMC2 and few additional components. Interacts with NDC80 and SQSTM1. Interacts with PAAF1. Interacts with TRIM5. Post-translationally, monoubiquitinated by RNF181. In terms of processing, phosphorylated. Dephosphorylated by UBLCP1 which impairs PSMC2 ATPase activity and disrupts 26S proteasome assembly.

Its subcellular location is the cytoplasm. Functionally, component of the 26S proteasome, a multiprotein complex involved in the ATP-dependent degradation of ubiquitinated proteins. This complex plays a key role in the maintenance of protein homeostasis by removing misfolded or damaged proteins, which could impair cellular functions, and by removing proteins whose functions are no longer required. Therefore, the proteasome participates in numerous cellular processes, including cell cycle progression, apoptosis, or DNA damage repair. PSMC2 belongs to the heterohexameric ring of AAA (ATPases associated with diverse cellular activities) proteins that unfolds ubiquitinated target proteins that are concurrently translocated into a proteolytic chamber and degraded into peptides. The protein is 26S proteasome regulatory subunit 7 (Psmc2) of Rattus norvegicus (Rat).